The chain runs to 168 residues: Gremlin-2 (168 aa).

The first 21 residues, 1–21, serve as a signal peptide directing secretion; it reads MFWKLSLTLLLVAVLVKVAET. A glycan (N-linked (GlcNAc...) asparagine) is linked at N40. Intrachain disulfides connect C73-C123, C87-C137, C97-C155, and C101-C157. Positions 73-163 constitute a CTCK domain; sequence CKTQPLRQTV…HCRCMSVNLS (91 aa). N161 carries an N-linked (GlcNAc...) asparagine glycan.

Belongs to the DAN family. Homodimer. Interacts with BMP2, BMP4 and BMP7, but has lower affinity for BMP7 than for BMP2 and BMP4. Binds heparin; this impairs the interaction with BMP2. Post-translationally, N-glycosylated. As to expression, highly expressed in the ovary, followed by brain, spleen, colon, kidney and uterus. In ovary expressed in granulosa cells of selective early antral follicles.

The protein localises to the secreted. In terms of biological role, cytokine that inhibits the activity of BMP2 and BMP4 in a dose-dependent manner, and thereby modulates signaling by BMP family members. Contributes to the regulation of embryonic morphogenesis via BMP family members. Antagonizes BMP4-induced suppression of progesterone production in granulosa cells. The sequence is that of Gremlin-2 (Grem2) from Mus musculus (Mouse).